The chain runs to 364 residues: Histidinol-phosphate aminotransferase (364 aa).

Lys226 carries the post-translational modification N6-(pyridoxal phosphate)lysine.

The protein belongs to the class-II pyridoxal-phosphate-dependent aminotransferase family. Histidinol-phosphate aminotransferase subfamily. In terms of assembly, homodimer. Requires pyridoxal 5'-phosphate as cofactor.

The enzyme catalyses L-histidinol phosphate + 2-oxoglutarate = 3-(imidazol-4-yl)-2-oxopropyl phosphate + L-glutamate. It participates in amino-acid biosynthesis; L-histidine biosynthesis; L-histidine from 5-phospho-alpha-D-ribose 1-diphosphate: step 7/9. The protein is Histidinol-phosphate aminotransferase of Sulfurimonas denitrificans (strain ATCC 33889 / DSM 1251) (Thiomicrospira denitrificans (strain ATCC 33889 / DSM 1251)).